A 250-amino-acid chain; its full sequence is PF03932 family protein CutC (250 aa).

This sequence belongs to the CutC family.

It localises to the cytoplasm. This is PF03932 family protein CutC from Vibrio vulnificus (strain CMCP6).